The sequence spans 98 residues: NADH-ubiquinone oxidoreductase chain 4L (98 aa).

Helical transmembrane passes span M1 to V21, L26 to L46, and I61 to I81.

This sequence belongs to the complex I subunit 4L family. As to quaternary structure, core subunit of respiratory chain NADH dehydrogenase (Complex I) which is composed of 45 different subunits.

The protein resides in the mitochondrion inner membrane. The catalysed reaction is a ubiquinone + NADH + 5 H(+)(in) = a ubiquinol + NAD(+) + 4 H(+)(out). Functionally, core subunit of the mitochondrial membrane respiratory chain NADH dehydrogenase (Complex I) which catalyzes electron transfer from NADH through the respiratory chain, using ubiquinone as an electron acceptor. Part of the enzyme membrane arm which is embedded in the lipid bilayer and involved in proton translocation. This Chlorocebus aethiops (Green monkey) protein is NADH-ubiquinone oxidoreductase chain 4L (MT-ND4L).